The sequence spans 386 residues: CRISPR system endoribonuclease Csm6' (386 aa).

A CARF domain region spans residues 1–146 (MRVLISAVGD…ASNENIGHDN (146 aa)). Residues 147-386 (DENIDELIEV…LNKILLTKLN (240 aa)) form an HEPN domain region.

It belongs to the CRISPR-associated Csm6 family. Homodimer. The composite ssRNase active site is formed at the dimer interface.

With respect to regulation, non-specific ssRNase activity is stimulated about 1000-fold by cyclic oligoadenylate (cOA), a second messenger produced by Cas10 of the ternary Csm effector complex in the presence of a cognate target RNA. In terms of biological role, CRISPR (clustered regularly interspaced short palindromic repeat) is an adaptive immune system that provides protection against mobile genetic elements (viruses, transposable elements and conjugative plasmids). CRISPR clusters contain spacers, sequences complementary to antecedent mobile elements, and target invading nucleic acids. CRISPR clusters are transcribed and processed into CRISPR RNA (crRNA). The type III-A Csm complex binds crRNA and acts as a crRNA-guided RNase, DNase and cyclic oligoadenylate synthase; binding of target RNA cognate to the crRNA is required for all activities. In a heterologous host this Csm effector complex restricts ssRNA phage MS2, suggesting it may target RNA viruses in vivo. This protein is not part of the Csm complex. Functionally, csm functions as a non-specific ssDNase. Base-pairing between crRNA and target RNA to form a ternary Csm complex activates a ssDNase activity; target RNA cleavage suppresses the ssDNase, a temporal control that prevents uncontrolled DNA degradation. Viral RNA transcripts probably tether the Csm complex to the viral genome, recruiting Cas10 ssDNA activity which is able to degrade DNA in the transcription bubble, spatially controlling the DNase activity. A single-strand-specific endoribonuclease (ssRNase) that is approximately 1000-fold stimulated by cyclic oligoadenylate (cOA); although several species of cOA are synthesized by this organism only cyclic hexaadenylate (cA6) stimulates the ssRNase activity. Cleaves preferentially within GA or AA dinucleotides, although the presence of cA6 broadens the preference. The polypeptide is CRISPR system endoribonuclease Csm6' (Streptococcus thermophilus).